The sequence spans 103 residues: Large ribosomal subunit protein bL21 (103 aa).

This sequence belongs to the bacterial ribosomal protein bL21 family. As to quaternary structure, part of the 50S ribosomal subunit. Contacts protein L20.

Its function is as follows. This protein binds to 23S rRNA in the presence of protein L20. This is Large ribosomal subunit protein bL21 from Maridesulfovibrio salexigens (strain ATCC 14822 / DSM 2638 / NCIMB 8403 / VKM B-1763) (Desulfovibrio salexigens).